The primary structure comprises 465 residues: Phospholipase A1-II 5 (465 aa).

The Acyl-ester intermediate role is filled by S233. Active-site charge relay system residues include S233, D297, and H336.

The protein belongs to the AB hydrolase superfamily. Lipase family.

It is found in the cytoplasm. Functionally, acylhydrolase that catalyzes the hydrolysis of phospholipids at the sn-1 position. The protein is Phospholipase A1-II 5 of Oryza sativa subsp. japonica (Rice).